A 279-amino-acid polypeptide reads, in one-letter code: Movement protein (279 aa).

Residues 256–266 (PPIAIGSPSAS) are compositionally biased toward low complexity. Positions 256 to 279 (PPIAIGSPSASRNNSFRSQVVNGL) are disordered. Polar residues predominate over residues 267 to 279 (RNNSFRSQVVNGL).

The protein belongs to the cucumovirus movement protein family.

The protein localises to the host cell junction. It is found in the host plasmodesma. Functionally, transports viral genome to neighboring plant cells directly through plasmosdesmata, without any budding. The movement protein allows efficient cell to cell propagation, by bypassing the host cell wall barrier. Acts by forming a tubular structure at the host plasmodesmata, enlarging it enough to allow free passage of virion capsids. The chain is Movement protein from Cucumis sativus (Cucumber).